A 287-amino-acid chain; its full sequence is uncharacterized protein (287 aa).

Helical transmembrane passes span 4–24 (TTNG…SLPA), 36–56 (FLTV…LLIF), 66–86 (LISL…LTAL), 93–113 (SAHA…FGVL), 122–142 (VFWI…LIQG), 148–168 (LGDA…AEGA), 179–199 (VISW…FFFT), 208–228 (VPAL…GFVF), 237–259 (GIAA…ASVI), and 264–286 (VGWA…RRFA). EamA domains lie at 16-139 (LIFS…GFAL) and 158-284 (VVCG…AARR).

This sequence belongs to the EamA transporter family.

Its subcellular location is the cell membrane. This is an uncharacterized protein from Bacillus subtilis (strain 168).